The following is a 251-amino-acid chain: Fibroblast growth factor 23 (251 aa).

The N-terminal stretch at 1-24 is a signal peptide; the sequence is MLGACLRLLVGALCTVCSLGTARA. An intrachain disulfide couples Cys-95 to Cys-113. Thr-171 and Thr-178 each carry an O-linked (GalNAc) threonine glycan. The segment at 175–251 is disordered; sequence RRHTRSAEDP…DRCRPFPRFV (77 aa). Residues 179 to 189 are compositionally biased toward basic and acidic residues; it reads RSAEDPPERDP. Position 180 is a phosphoserine; by FAM20C (Ser-180).

It belongs to the heparin-binding growth factors family. Interacts with FGFR1, FGFR2, FGFR3 and FGFR4. Affinity between fibroblast growth factors (FGFs) and their receptors is increased by KL and heparan sulfate glycosaminoglycans that function as coreceptors. Post-translationally, following secretion this protein is inactivated by cleavage into a N-terminal fragment and a C-terminal fragment. The processing is effected by proprotein convertases. O-glycosylated at Thr-171 and Thr-178 by GALNT3 and glycosylation of Thr-178 requires previous glycosylation at Thr171. Glycosylation is necessary for secretion; it blocks processing by proprotein convertases when the O-glycan is alpha 2,6-sialylated. Competition between proprotein convertase cleavage and block of cleavage by O-glycosylation determines the level of secreted active FGF23. In terms of processing, phosphorylation at Ser-180 mediated by FAM20C slows down glycosylation at Thr-178 notably. Expressed in the parathyroid.

It localises to the secreted. Its function is as follows. Regulator of phosphate homeostasis. Inhibits renal tubular phosphate transport by reducing SLC34A1 levels. Regulator of vitamin-D metabolism. Negatively regulates osteoblasts differentiation and matrix mineralization. Acts directly on the parathyroid to decrease PTH secretion. Up-regulates EGR1 expression in the presence of KL. In Rattus norvegicus (Rat), this protein is Fibroblast growth factor 23 (Fgf23).